A 424-amino-acid polypeptide reads, in one-letter code: G1/S-specific cyclin-E (424 aa).

Residues 1 to 25 (MSRRSGRLQSRQDNQPLTECISDEN) form a disordered region. Residues 7-17 (RLQSRQDNQPL) are compositionally biased toward polar residues. A Phosphothreonine modification is found at T411.

The protein belongs to the cyclin family. Cyclin E subfamily. Interacts with a member of the CDK2/CDK protein kinases to form a serine/threonine kinase holoenzyme complex. The cyclin subunit imparts substrate specificity to the complex.

The protein localises to the nucleus. Functionally, essential for the control of the cell cycle at the G1/S (start) transition. The sequence is that of G1/S-specific cyclin-E (CYCE) from Hemicentrotus pulcherrimus (Sea urchin).